Reading from the N-terminus, the 122-residue chain is Large ribosomal subunit protein uL14 (122 aa).

This sequence belongs to the universal ribosomal protein uL14 family. As to quaternary structure, part of the 50S ribosomal subunit. Forms a cluster with proteins L3 and L19. In the 70S ribosome, L14 and L19 interact and together make contacts with the 16S rRNA in bridges B5 and B8.

Binds to 23S rRNA. Forms part of two intersubunit bridges in the 70S ribosome. The chain is Large ribosomal subunit protein uL14 from Acidiphilium cryptum (strain JF-5).